A 424-amino-acid chain; its full sequence is Set1 complex component spp1 (424 aa).

Positions 80 to 108 (QQPTIPKKPPVSAHRRGPRKHRGNANSQL) are disordered. Basic residues predominate over residues 92–102 (AHRRGPRKHRG). The PHD-type zinc finger occupies 118-168 (PLYCICQKPDDGSWMLGCDGCEDWFHGTCVNIPESYNDLTVQYFCPKCTEE).

Component of the Set1 complex composed of ash2, sdc1, set1, shg1, spp1, swd1, swd2 and swd3.

The protein localises to the nucleus. Its function is as follows. The Set1 complex specifically methylates 'Lys-4' of histone H3. This chain is Set1 complex component spp1 (spp1), found in Schizosaccharomyces pombe (strain 972 / ATCC 24843) (Fission yeast).